A 310-amino-acid chain; its full sequence is Mitochondrial thiamine pyrophosphate carrier 1 (310 aa).

Transmembrane regions (helical) follow at residues valine 16–alanine 32, isoleucine 88–leucine 104, isoleucine 117–tyrosine 141, glycine 173–tryptophan 197, isoleucine 218–leucine 234, and glycine 274–tryptophan 291. Solcar repeat units follow at residues valine 16–serine 107, proline 120–phenylalanine 205, and histidine 211–alanine 299.

This sequence belongs to the mitochondrial carrier (TC 2.A.29) family.

It localises to the mitochondrion inner membrane. Mitochondrial transporter that mediates uptake of thiamine pyrophosphate (ThPP) into mitochondria. This chain is Mitochondrial thiamine pyrophosphate carrier 1 (TPC1), found in Lodderomyces elongisporus (strain ATCC 11503 / CBS 2605 / JCM 1781 / NBRC 1676 / NRRL YB-4239) (Yeast).